Reading from the N-terminus, the 274-residue chain is Probable lipoprotein peptidase YaeF (274 aa).

The first 20 residues, 1–20 (MDKPKAYCRLFLPSFLLLSA), serve as a signal peptide directing secretion. C21 carries N-palmitoyl cysteine lipidation. C21 carries S-diacylglycerol cysteine lipidation. C207 acts as the Nucleophile in catalysis. H257 functions as the Proton acceptor in the catalytic mechanism.

Its subcellular location is the cell inner membrane. This is Probable lipoprotein peptidase YaeF (yaeF) from Escherichia coli (strain K12).